We begin with the raw amino-acid sequence, 76 residues long: Acyl carrier protein (76 aa).

Positions 2 to 76 (KDNFTRLQSI…QDVLNYLERN (75 aa)) constitute a Carrier domain. At Ser-37 the chain carries O-(pantetheine 4'-phosphoryl)serine.

It belongs to the acyl carrier protein (ACP) family. In terms of processing, 4'-phosphopantetheine is transferred from CoA to a specific serine of apo-ACP by AcpS. This modification is essential for activity because fatty acids are bound in thioester linkage to the sulfhydryl of the prosthetic group.

The protein resides in the plastid. Its subcellular location is the chloroplast. Its pathway is lipid metabolism; fatty acid biosynthesis. Its function is as follows. Carrier of the growing fatty acid chain in fatty acid biosynthesis. This chain is Acyl carrier protein, found in Phaeodactylum tricornutum (strain CCAP 1055/1).